The primary structure comprises 319 residues: Sphingomyelinase D (319 aa).

The signal sequence occupies residues 1-23 (MTPLLRTICAILCILIAVPLTFA). The active site involves H44. 3 residues coordinate Mg(2+): E64, D66, and D109. The SMD-tail signature appears at 312–319 (ATGADKPW).

It belongs to the sphingomyelinase D/phospholipase D family. The cofactor is Mg(2+).

It is found in the secreted. It carries out the reaction a sphingomyelin + H2O = an N-acylsphing-4-enine 1-phosphate + choline + H(+). Catalyzes the hydrolysis of sphingomyelin. Sphingomyelinases D are produced by some spider in their venoms, but also by arthropods such as ticks, or pathogenic bacteria and fungi. They might play a role in pathogenicity through different mechanisms, such as membrane destabilization and host cell penetration, but also pulmonary inflammation and cutaneous lesions. The polypeptide is Sphingomyelinase D (Ajellomyces capsulatus (strain G186AR / H82 / ATCC MYA-2454 / RMSCC 2432) (Darling's disease fungus)).